Consider the following 975-residue polypeptide: Glycine dehydrogenase (decarboxylating) (975 aa).

Lysine 723 carries the post-translational modification N6-(pyridoxal phosphate)lysine.

This sequence belongs to the GcvP family. As to quaternary structure, the glycine cleavage system is composed of four proteins: P, T, L and H. It depends on pyridoxal 5'-phosphate as a cofactor.

It carries out the reaction N(6)-[(R)-lipoyl]-L-lysyl-[glycine-cleavage complex H protein] + glycine + H(+) = N(6)-[(R)-S(8)-aminomethyldihydrolipoyl]-L-lysyl-[glycine-cleavage complex H protein] + CO2. In terms of biological role, the glycine cleavage system catalyzes the degradation of glycine. The P protein binds the alpha-amino group of glycine through its pyridoxal phosphate cofactor; CO(2) is released and the remaining methylamine moiety is then transferred to the lipoamide cofactor of the H protein. In Burkholderia lata (strain ATCC 17760 / DSM 23089 / LMG 22485 / NCIMB 9086 / R18194 / 383), this protein is Glycine dehydrogenase (decarboxylating).